Reading from the N-terminus, the 471-residue chain is MPNAPEVNSVWDELLWRGLVCVSTDQGALKELLDGPPIRFYCGFDPTAPSLHVGNLAQILIMRRLQLAGHRPIALVGGSTGLIGDPRPGGERQLHSHEQVQEWVRALQQQLSRFLDFKGAAAAVLVNNLDWTKSLTALDFLRELGKHFRVNAMLKKDAVAARLSSTEGISYTEFSYQILQSLDFRQLYLDYKCVLQIGGSDQWGNITSGVDLIRKTEGAGVHAFGSPLLTASDGSKFGKTEGNAIWLDADLTSPWSFYQFFLNSDDADIPRLLRVFTFFTRSEIEDLNRSVRENASARLAHRHLAYSVTRLVHGADVADQVLLACSVLFGDGGALGKTQTGLPRIDSDTLNDSSGVTTIKAQDNTYTPYSPEGVRFAGTFPVDPRFLRSILFELPNATVSAHDLITHILQKVGLCRSLSEARRLISQGGIYVNNIKVTCPDALLDSFLDNSMPIRAAILRKGKKHLAAVFY.

Y41 provides a ligand contact to L-tyrosine. Residues 46-55 carry the 'HIGH' region motif; it reads PTAPSLHVGN. Residues Y176 and Q180 each contribute to the L-tyrosine site. Residues 236–240 carry the 'KMSKS' region motif; the sequence is KFGKT. Residue K239 coordinates ATP. Residues 403-471 form the S4 RNA-binding domain; sequence DLITHILQKV…GKKHLAAVFY (69 aa).

It belongs to the class-I aminoacyl-tRNA synthetase family. TyrS type 1 subfamily. As to quaternary structure, homodimer.

It localises to the cytoplasm. The catalysed reaction is tRNA(Tyr) + L-tyrosine + ATP = L-tyrosyl-tRNA(Tyr) + AMP + diphosphate + H(+). In terms of biological role, catalyzes the attachment of tyrosine to tRNA(Tyr) in a two-step reaction: tyrosine is first activated by ATP to form Tyr-AMP and then transferred to the acceptor end of tRNA(Tyr). This is Tyrosine--tRNA ligase from Tropheryma whipplei (strain Twist) (Whipple's bacillus).